The primary structure comprises 271 residues: Ribosomal RNA small subunit methyltransferase A (271 aa).

S-adenosyl-L-methionine-binding residues include histidine 11, leucine 13, glycine 38, glutamate 58, aspartate 86, and asparagine 101.

It belongs to the class I-like SAM-binding methyltransferase superfamily. rRNA adenine N(6)-methyltransferase family. RsmA subfamily.

It localises to the cytoplasm. The enzyme catalyses adenosine(1518)/adenosine(1519) in 16S rRNA + 4 S-adenosyl-L-methionine = N(6)-dimethyladenosine(1518)/N(6)-dimethyladenosine(1519) in 16S rRNA + 4 S-adenosyl-L-homocysteine + 4 H(+). Its function is as follows. Specifically dimethylates two adjacent adenosines (A1518 and A1519) in the loop of a conserved hairpin near the 3'-end of 16S rRNA in the 30S particle. May play a critical role in biogenesis of 30S subunits. The chain is Ribosomal RNA small subunit methyltransferase A from Helicobacter acinonychis (strain Sheeba).